The following is a 172-amino-acid chain: Large ribosomal subunit protein uL10 (172 aa).

The protein belongs to the universal ribosomal protein uL10 family. Part of the ribosomal stalk of the 50S ribosomal subunit. The N-terminus interacts with L11 and the large rRNA to form the base of the stalk. The C-terminus forms an elongated spine to which L12 dimers bind in a sequential fashion forming a multimeric L10(L12)X complex.

Functionally, forms part of the ribosomal stalk, playing a central role in the interaction of the ribosome with GTP-bound translation factors. The sequence is that of Large ribosomal subunit protein uL10 (rplJ) from Chlamydia trachomatis serovar D (strain ATCC VR-885 / DSM 19411 / UW-3/Cx).